A 1203-amino-acid chain; its full sequence is Regulator of telomere elongation helicase 1 (1203 aa).

Positions 7-296 (NGVTVDFPFQ…ARVTQQGELQ (290 aa)) constitute a Helicase ATP-binding domain. 42 to 49 (SPTGTGKT) contributes to the ATP binding site. [4Fe-4S] cluster is bound by residues Cys145, Cys163, Cys172, and Cys207. A Nuclear localization signal motif is present at residues 151 to 167 (KKQESNHMQISLCRKKV). The short motif at 250-253 (DEAH) is the DEAH box element. The short motif at 871–877 (QKGGRKK) is the Nuclear localization signal element. 2 disordered regions span residues 998 to 1020 (QLDP…TSKG) and 1120 to 1203 (TTGK…RSKQ). Residues 1004 to 1020 (HLNQGQPHLSAHPTSKG) are compositionally biased toward polar residues. The segment covering 1123–1134 (KDLELEGPRDES) has biased composition (basic and acidic residues). The PIP-box motif lies at 1160–1167 (QSKISSFF). A compositionally biased stretch (basic and acidic residues) spans 1169-1181 (QRPDESVRSDDTT).

Belongs to the helicase family. RAD3/XPD subfamily. Interacts with TERF1. Interacts (via PIP-box) with PCNA; the interaction is direct and essential for suppressing telomere fragility. Interacts with MMS19; the interaction mediates the association of RTEL1 with the cytosolic iron-sulfur protein assembly (CIA) complex. In terms of tissue distribution, widely expressed. Expressed in spleen, thymus, Peyer patches, kidney, and intestine. Not expressed in brain, heart, lung, skeletal muscles, skin and white fat. In the adult gonad, it is highly expressed in the testis, mainly in the spermatogonia and meiotic spermatocytes.

Its subcellular location is the nucleus. It carries out the reaction ATP + H2O = ADP + phosphate + H(+). A probable ATP-dependent DNA helicase implicated in telomere-length regulation, DNA repair and the maintenance of genomic stability. Acts as an anti-recombinase to counteract toxic recombination and limit crossover during meiosis. Regulates meiotic recombination and crossover homeostasis by physically dissociating strand invasion events and thereby promotes noncrossover repair by meiotic synthesis dependent strand annealing (SDSA) as well as disassembly of D loop recombination intermediates. Also disassembles T loops and prevents telomere fragility by counteracting telomeric G4-DNA structures, which together ensure the dynamics and stability of the telomere. The sequence is that of Regulator of telomere elongation helicase 1 from Mus musculus (Mouse).